Consider the following 695-residue polypeptide: MAETKIIYHMDEEETPYLVKLPVAPERVTLADFKNVLSNRPVHAYKFFFKSMDQDFGVVKEEIFDDNAKLPCFNGRVVSWLVLAEGAHSDAGSQGTDSHTDLPPPLERTGGIGDSRPPSFHPNVASSRDGMDNETGTESMVSHRRERARRRNRDEAARTNGHPRGDRRRDLGLPPDSASTVLSSELESSSFIDSDEEDNTSRLSSSTEQSTSSRLVRKHKCRRRKQRLRQTDRASSFSSITDSTMSLNIITVTLNMERHHFLGISIVGQSNDRGDGGIYIGSIMKGGAVAADGRIEPGDMLLQVNDVNFENMSNDDAVRVLREIVSQTGPISLTVAKCWDPTPRSYFTIPRADPVRPIDPAAWLSHTAALTGALPRYGTSPCSSAITRTSSSSLTSSVPGAPQLEEAPLTVKSDMSAIVRVMQLPDSGLEIRDRMWLKITIANAVIGADVVDWLYTHVEGFKERREARKYASSMLKHGFLRHTVNKITFSEQCYYVFGDLCSNLASLNLNSGSSGASDQDTLAPLPHPSVPWPLGQGYPYQYPGPPPCFPPAYQDPGFSCGSGSAGSQQSEGSKSSGSTRSSHRTPGREERRATGAGGSGSESDHTVPSGSGSTGWWERPVSQLSRGSSPRSQASAVAPGLPPLHPLTKAYAVVGGPPGGPPVRELAAVPPELTGSRQSFQKAMGNPCEFFVDIM.

Residues 1 to 85 form the DIX domain; sequence MAETKIIYHM…RVVSWLVLAE (85 aa). The disordered stretch occupies residues 89–235; that stretch reads SDAGSQGTDS…QRLRQTDRAS (147 aa). Basic residues predominate over residues 142 to 151; it reads SHRRERARRR. The segment covering 152 to 171 has biased composition (basic and acidic residues); the sequence is NRDEAARTNGHPRGDRRRDL. The span at 177-192 shows a compositional bias: low complexity; the sequence is SASTVLSSELESSSFI. Phosphoserine is present on S194. The segment covering 201–214 has biased composition (low complexity); sequence SRLSSSTEQSTSSR. Basic residues predominate over residues 215-228; it reads LVRKHKCRRRKQRL. The region spanning 251–323 is the PDZ domain; it reads TVTLNMERHH…NDDAVRVLRE (73 aa). Residues 425 to 499 form the DEP domain; sequence PDSGLEIRDR…SEQCYYVFGD (75 aa). Residues 559–580 are compositionally biased toward low complexity; it reads SCGSGSAGSQQSEGSKSSGSTR. Residues 559–641 form a disordered region; sequence SCGSGSAGSQ…SQASAVAPGL (83 aa). The span at 622–635 shows a compositional bias: polar residues; sequence SQLSRGSSPRSQAS.

Belongs to the DSH family. Interacts with CXXC4. Interacts (via PDZ domain) with TMEM88. Interacts with BRD7 and INVS. Interacts (via PDZ domain) with VANGL1 and VANGL2 (via C-terminus). Interacts (via PDZ domain) with NXN. Interacts with ARRB1; the interaction is enhanced by phosphorylation of DVL1. Interacts with CYLD. Interacts (via PDZ domain) with RYK. Self-associates (via DIX domain) and forms higher homooligomers. Interacts (via PDZ domain) with DACT1 and FZD7, where DACT1 and FZD7 compete for the same binding site. Interacts (via DEP domain) with MUSK; the interaction is direct and mediates the formation a DVL1, MUSK and PAK1 ternary complex involved in AChR clustering. Interacts with DCDC2. Interacts with FOXK2. Interacts with PKD1 (via extracellular domain). Interacts (via PDZ domain) with CCDC88C/DAPLE; competes with CCDC88C for binding to frizzled receptor FZD7 and dissociates from CCDC88C following initiation of non-canonical Wnt signaling when CCDC88C displaces DVL1 from ligand-activated FZD7. Post-translationally, ubiquitinated; undergoes both 'Lys-48'-linked ubiquitination, leading to its subsequent degradation by the ubiquitin-proteasome pathway, and 'Lys-63'-linked ubiquitination. The interaction with INVS is required for ubiquitination. Deubiquitinated by CYLD, which acts on 'Lys-63'-linked ubiquitin chains. As to expression, high levels are seen in the brain, testis and kidney, lower levels in the ovary, breast, muscle, liver and small intestine, and very low levels are seen in the spleen and thymus. A moderate level expression is seen in the heart.

Its subcellular location is the cell membrane. It localises to the cytoplasm. It is found in the cytosol. The protein localises to the cytoplasmic vesicle. Participates in Wnt signaling by binding to the cytoplasmic C-terminus of frizzled family members and transducing the Wnt signal to down-stream effectors. Plays a role both in canonical and non-canonical Wnt signaling. Plays a role in the signal transduction pathways mediated by multiple Wnt genes. Required for LEF1 activation upon WNT1 and WNT3A signaling. DVL1 and PAK1 form a ternary complex with MUSK which is important for MUSK-dependent regulation of AChR clustering during the formation of the neuromuscular junction (NMJ). The chain is Segment polarity protein dishevelled homolog DVL-1 (Dvl1) from Mus musculus (Mouse).